The primary structure comprises 200 residues: N-(5'-phosphoribosyl)anthranilate isomerase (200 aa).

The protein belongs to the TrpF family.

It catalyses the reaction N-(5-phospho-beta-D-ribosyl)anthranilate = 1-(2-carboxyphenylamino)-1-deoxy-D-ribulose 5-phosphate. Its pathway is amino-acid biosynthesis; L-tryptophan biosynthesis; L-tryptophan from chorismate: step 3/5. This Endomicrobium trichonymphae protein is N-(5'-phosphoribosyl)anthranilate isomerase.